The primary structure comprises 434 residues: Putative F-box/FBD/LRR-repeat protein At1g16940 (434 aa).

The F-box domain occupies histidine 10–phenylalanine 66. 6 LRR repeats span residues phenylalanine 72–asparagine 99, arginine 114–arginine 141, isoleucine 164–lysine 189, cysteine 204–arginine 231, aspartate 252–phenylalanine 277, and methionine 306–phenylalanine 331. The region spanning tryptophan 336–leucine 385 is the FBD domain.

The chain is Putative F-box/FBD/LRR-repeat protein At1g16940 from Arabidopsis thaliana (Mouse-ear cress).